The sequence spans 363 residues: DNA polymerase IV (363 aa).

In terms of domain architecture, UmuC spans 14–197; sequence IIHIDMDAFF…LPVEKFHGVG (184 aa). 2 residues coordinate Mg(2+): Asp-18 and Asp-115. Glu-116 is an active-site residue.

It belongs to the DNA polymerase type-Y family. Monomer. It depends on Mg(2+) as a cofactor.

It localises to the cytoplasm. It carries out the reaction DNA(n) + a 2'-deoxyribonucleoside 5'-triphosphate = DNA(n+1) + diphosphate. In terms of biological role, poorly processive, error-prone DNA polymerase involved in untargeted mutagenesis. Copies undamaged DNA at stalled replication forks, which arise in vivo from mismatched or misaligned primer ends. These misaligned primers can be extended by PolIV. Exhibits no 3'-5' exonuclease (proofreading) activity. May be involved in translesional synthesis, in conjunction with the beta clamp from PolIII. The protein is DNA polymerase IV of Lactococcus lactis subsp. lactis (strain IL1403) (Streptococcus lactis).